Here is a 203-residue protein sequence, read N- to C-terminus: ATP-dependent Clp protease proteolytic subunit 2 (203 aa).

The active-site Nucleophile is the Ser100. His125 is a catalytic residue.

It belongs to the peptidase S14 family. As to quaternary structure, fourteen ClpP subunits assemble into 2 heptameric rings which stack back to back to give a disk-like structure with a central cavity, resembling the structure of eukaryotic proteasomes.

It is found in the cytoplasm. The catalysed reaction is Hydrolysis of proteins to small peptides in the presence of ATP and magnesium. alpha-casein is the usual test substrate. In the absence of ATP, only oligopeptides shorter than five residues are hydrolyzed (such as succinyl-Leu-Tyr-|-NHMec, and Leu-Tyr-Leu-|-Tyr-Trp, in which cleavage of the -Tyr-|-Leu- and -Tyr-|-Trp bonds also occurs).. Functionally, cleaves peptides in various proteins in a process that requires ATP hydrolysis. Has a chymotrypsin-like activity. Plays a major role in the degradation of misfolded proteins. This Thermobifida fusca (strain YX) protein is ATP-dependent Clp protease proteolytic subunit 2.